Reading from the N-terminus, the 86-residue chain is High affinity immunoglobulin epsilon receptor subunit gamma (86 aa).

Positions 1–18 (MISAVILFLLLLVEQAAA) are cleaved as a signal peptide. Residues 19–23 (LGEPQ) lie on the Extracellular side of the membrane. A helical membrane pass occupies residues 24–44 (LCYILDAVLFLYGIVLTLLYC). The Cytoplasmic portion of the chain corresponds to 45 to 86 (RLKIQVRKAAIASREKADAVYTGLNTRSQETYETLKHEKPPQ). One can recognise an ITAM domain in the interval 54 to 82 (AIASREKADAVYTGLNTRSQETYETLKHE). Tyr65 and Tyr76 each carry phosphotyrosine. Thr78 is modified (phosphothreonine).

Belongs to the CD3Z/FCER1G family. IgE Fc receptor is a tetramer of an alpha chain, a beta chain, and two disulfide linked gamma chains. Associates with FCGR1A; forms a functional signaling complex. The signaling subunit of immunoglobulin gamma (IgG) Fc receptor complex. As a homodimer or a heterodimer of CD247 and FCER1G, associates with the ligand binding subunit FCGR3A to form a functional receptor complex. Associates with CLEC6A. Interacts with CLEC4E. Interacts (via ITAM domain) with SYK (via SH2 domains); activates SYK, enabling integrin-mediated activation of neutrophils and macrophages. Interacts with CSF2RB and recruits SYK in response to IL3 stimulation; this interaction is direct. Interacts with CD300LH; the interaction may be indirect. Interacts with CD300LD. Interacts with TARM1. In terms of tissue distribution, expressed in mast cells (at protein level). Expressed in basophils (at protein level).

Its subcellular location is the cell membrane. Adapter protein containing an immunoreceptor tyrosine-based activation motif (ITAM) that transduces activation signals from various immunoreceptors. As a component of the high-affinity immunoglobulin E (IgE) receptor, mediates allergic inflammatory signaling in mast cells. As a constitutive component of interleukin-3 receptor complex, selectively mediates interleukin 4/IL4 production by basophils, priming T-cells toward effector T-helper 2 subset. Associates with pattern recognition receptors CLEC4D and CLEC4E to form a functional signaling complex in myeloid cells. Binding of mycobacterial trehalose 6,6'-dimycolate (TDM) to this receptor complex leads to phosphorylation of ITAM, triggering activation of SYK, CARD9 and NF-kappa-B, consequently driving maturation of antigen-presenting cells and shaping antigen-specific priming of T-cells toward effector T-helper 1 and T-helper 17 cell subtypes. May function cooperatively with other activating receptors. Functionally linked to integrin beta-2/ITGB2-mediated neutrophil activation. Also involved in integrin alpha-2/ITGA2-mediated platelet activation. This is High affinity immunoglobulin epsilon receptor subunit gamma from Mus musculus (Mouse).